We begin with the raw amino-acid sequence, 327 residues long: Probable 6-phosphogluconolactonase 3, chloroplastic (327 aa).

Composition is skewed to low complexity over residues 1-29 and 43-66; these read MSASAAVSSTCAAASSTTSRRSSSSPASR and VASRTSPRSPVVPPVYATASPGGA. Residues 1–66 form a disordered region; it reads MSASAAVSST…VYATASPGGA (66 aa). The N-terminal 71 residues, 1 to 71, are a transit peptide targeting the chloroplast; that stretch reads MSASAAVSST…SPGGAGGTTA (71 aa).

The protein belongs to the glucosamine/galactosamine-6-phosphate isomerase family. 6-phosphogluconolactonase subfamily.

Its subcellular location is the plastid. The protein localises to the chloroplast. It catalyses the reaction 6-phospho-D-glucono-1,5-lactone + H2O = 6-phospho-D-gluconate + H(+). It participates in carbohydrate degradation; pentose phosphate pathway; D-ribulose 5-phosphate from D-glucose 6-phosphate (oxidative stage): step 2/3. In terms of biological role, hydrolysis of 6-phosphogluconolactone to 6-phosphogluconate. In Oryza sativa subsp. indica (Rice), this protein is Probable 6-phosphogluconolactonase 3, chloroplastic.